The following is a 202-amino-acid chain: Apolipoprotein R (202 aa).

An N-terminal signal peptide occupies residues 1-28 (MPPNLQRIFPALCLLGVLFLLHCTPVLC). 2 consecutive Sushi domains span residues 29–87 (GCDN…QCKA) and 88–145 (LCPK…KCEW). 4 cysteine pairs are disulfide-bonded: Cys30–Cys73, Cys59–Cys85, Cys89–Cys130, and Cys116–Cys143.

In terms of assembly, forms high molecular weight disulfide-linked complexes. In terms of tissue distribution, plasma. Found on very low-density lipoprotein (VLDL), on chylomicrons, and in the D &gt; 1.21 g/ml fraction of pig plasma. Found in liver, spleen, lung, bone marrow and lymph node.

It localises to the secreted. May be a lipoprotein-borne regulator of either the coagulation or the complement cascades. The polypeptide is Apolipoprotein R (APOR) (Sus scrofa (Pig)).